Reading from the N-terminus, the 101-residue chain is NADH-quinone oxidoreductase subunit K (101 aa).

3 consecutive transmembrane segments (helical) span residues 4 to 24 (LSDYLILSSVIFCIGLVGIFV), 29 to 49 (IITLLMCVELILVAVNTNFVA), and 61 to 81 (IFVFFILTVAAAEVAIGLAIL).

It belongs to the complex I subunit 4L family. NDH-1 is composed of 14 different subunits. Subunits NuoA, H, J, K, L, M, N constitute the membrane sector of the complex.

It localises to the cell inner membrane. It carries out the reaction a quinone + NADH + 5 H(+)(in) = a quinol + NAD(+) + 4 H(+)(out). NDH-1 shuttles electrons from NADH, via FMN and iron-sulfur (Fe-S) centers, to quinones in the respiratory chain. The immediate electron acceptor for the enzyme in this species is believed to be ubiquinone. Couples the redox reaction to proton translocation (for every two electrons transferred, four hydrogen ions are translocated across the cytoplasmic membrane), and thus conserves the redox energy in a proton gradient. The protein is NADH-quinone oxidoreductase subunit K of Ruthia magnifica subsp. Calyptogena magnifica.